The sequence spans 474 residues: Eukaryotic translation initiation factor 3 subunit L (474 aa).

Residues 255–449 (DAIRMFSHIL…DLDYALQGDL (195 aa)) form the PCI domain.

The protein belongs to the eIF-3 subunit L family. As to quaternary structure, component of the eukaryotic translation initiation factor 3 (eIF-3) complex.

It localises to the cytoplasm. Its function is as follows. Component of the eukaryotic translation initiation factor 3 (eIF-3) complex, which is involved in protein synthesis of a specialized repertoire of mRNAs and, together with other initiation factors, stimulates binding of mRNA and methionyl-tRNAi to the 40S ribosome. The eIF-3 complex specifically targets and initiates translation of a subset of mRNAs involved in cell proliferation. The polypeptide is Eukaryotic translation initiation factor 3 subunit L (Chaetomium globosum (strain ATCC 6205 / CBS 148.51 / DSM 1962 / NBRC 6347 / NRRL 1970) (Soil fungus)).